The primary structure comprises 188 residues: Trafficking protein particle complex subunit 5 (188 aa).

The protein belongs to the TRAPP small subunits family. BET3 subfamily. In terms of assembly, part of the multisubunit TRAPP (transport protein particle) complex.

Its subcellular location is the golgi apparatus. It localises to the cis-Golgi network. The protein resides in the endoplasmic reticulum. May play a role in vesicular transport from endoplasmic reticulum to Golgi. The sequence is that of Trafficking protein particle complex subunit 5 (TRAPPC5) from Gallus gallus (Chicken).